The chain runs to 250 residues: Mycofactocin precursor peptide peptidase (250 aa).

Glu38, His40, Asp49, His127, and Glu166 together coordinate a divalent metal cation.

The protein belongs to the creatininase superfamily. Homooctamer. Fe(2+) is required as a cofactor. The cofactor is Zn(2+).

The catalysed reaction is [mycofactocin precursor peptide]-C-terminal glycyl-N-{5-[(4-hydroxyphenyl)methyl]-4,4-dimethyl-2-oxopyrrolidin-3-yl}acetamide + H2O = [mycofactocin precursor peptide]-C-terminal glycine + 3-amino-5-[(4-hydroxyphenyl)methyl]-4,4-dimethyl-2-pyrrolidin-2-one. Functionally, peptidase involved in the biosynthesis of the enzyme cofactor mycofactocin (MFT). Catalyzes cleavage of the MftC-modified MftA peptide to liberate its final two residues, which consist of a cross-linked valine-decarboxylated tyrosine dipeptide (named 3-amino-5-[(4-hydroxyphenyl)methyl]-4,4-dimethyl-2-pyrrolidin-2-one or ADHP). The chain is Mycofactocin precursor peptide peptidase from Mycobacterium ulcerans (strain Agy99).